Consider the following 336-residue polypeptide: Heat-inducible transcription repressor HrcA (336 aa).

The protein belongs to the HrcA family.

Negative regulator of class I heat shock genes (grpE-dnaK-dnaJ and groELS operons). Prevents heat-shock induction of these operons. The protein is Heat-inducible transcription repressor HrcA of Variovorax paradoxus (strain S110).